The chain runs to 83 residues: Neurotoxin LmNaTx10 (83 aa).

An N-terminal signal peptide occupies residues 1–19 (MNFLIFIAVASSLALGALC). An LCN-type CS-alpha/beta domain is found at 21–80 (KEGYPYDGNNCRYICFRNQYCDDLCKKLKGESGYCYGWNQSCYCYGLPDTEKTKPDKRCH). Disulfide bonds link Cys31–Cys79, Cys35–Cys55, Cys41–Cys62, and Cys45–Cys64.

Belongs to the long (4 C-C) scorpion toxin superfamily. Sodium channel inhibitor family. Alpha subfamily. In terms of tissue distribution, expressed by the venom gland.

The protein localises to the secreted. Binds voltage-independently at site-3 of voltage-gated sodium channels (Nav) and inhibits the inactivation of the activated channels, thereby blocking neuronal transmission. This Lychas mucronatus (Chinese swimming scorpion) protein is Neurotoxin LmNaTx10.